A 446-amino-acid polypeptide reads, in one-letter code: Ribosome biogenesis protein WDR12 homolog (446 aa).

The tract at residues 21 to 105 (VQITFFSKDK…ETILKIECII (85 aa)) is ubiquitin-like (UBL) domain. 2 WD repeats span residues 171–211 (KCSG…LVEK) and 216–255 (GHER…EATI). The interval 256–275 (YEKEEEESSAKKKRKKDTRT) is disordered. WD repeat units lie at residues 284-324 (GHRD…EVSR), 326-365 (KGPK…GAMV), 371-412 (GHQN…SSLF), and 416-446 (GHED…FETS).

Belongs to the WD repeat WDR12/YTM1 family.

The protein resides in the nucleus. It is found in the nucleolus. The protein localises to the nucleoplasm. Required for maturation of ribosomal RNAs and formation of the large ribosomal subunit. In Caenorhabditis briggsae, this protein is Ribosome biogenesis protein WDR12 homolog.